Here is a 332-residue protein sequence, read N- to C-terminus: 2-oxoglutarate-dependent dioxygenase FG08081 (332 aa).

Residues 176–280 (RSKSTLYFLH…RYSISYFLRA (105 aa)) enclose the Fe2OG dioxygenase domain. The Fe cation site is built by His201, Asp203, and His258. Arg271 contributes to the 2-oxoglutarate binding site.

The protein belongs to the iron/ascorbate-dependent oxidoreductase family. Fe(2+) serves as cofactor.

It functions in the pathway mycotoxin biosynthesis. Functionally, 2-oxoglutarate-dependent dioxygenase; part of the gene cluster that mediates the biosynthesis of butenolide, a mycotoxin that shows antibiotic activity but does not seem to play a major role in the spread of head blight in wheat. Butenolide is derived from glutamic acid via a 4-acetamido-2-butenoic acid intermediate. The predicted function of the NADH:flavin oxidoreductase FG08077, the cytochrome P450 monooxygenase FG08079, the decarboxylase FG08083, and the putative acetyltransferase FG08082 are consistent with this pathway, however, the respective activities of the butelonide biosynthesis cluster enzymes have still to be experimentally determined. In Gibberella zeae (strain ATCC MYA-4620 / CBS 123657 / FGSC 9075 / NRRL 31084 / PH-1) (Wheat head blight fungus), this protein is 2-oxoglutarate-dependent dioxygenase FG08081.